The primary structure comprises 631 residues: 1-deoxy-D-xylulose-5-phosphate synthase (631 aa).

Residues His-87 and 128–130 contribute to the thiamine diphosphate site; that span reads GHS. Asp-159 is a binding site for Mg(2+). Thiamine diphosphate-binding positions include 160-161, Asn-188, Phe-295, and Glu-377; that span reads GA. Asn-188 contributes to the Mg(2+) binding site.

This sequence belongs to the transketolase family. DXPS subfamily. As to quaternary structure, homodimer. Mg(2+) serves as cofactor. Thiamine diphosphate is required as a cofactor.

It catalyses the reaction D-glyceraldehyde 3-phosphate + pyruvate + H(+) = 1-deoxy-D-xylulose 5-phosphate + CO2. It functions in the pathway metabolic intermediate biosynthesis; 1-deoxy-D-xylulose 5-phosphate biosynthesis; 1-deoxy-D-xylulose 5-phosphate from D-glyceraldehyde 3-phosphate and pyruvate: step 1/1. Its function is as follows. Catalyzes the acyloin condensation reaction between C atoms 2 and 3 of pyruvate and glyceraldehyde 3-phosphate to yield 1-deoxy-D-xylulose-5-phosphate (DXP). This Pseudomonas putida (strain GB-1) protein is 1-deoxy-D-xylulose-5-phosphate synthase.